Reading from the N-terminus, the 350-residue chain is MSKSRKPSLLPPGPVMVDVAGGQLTEQEKQRLRHPLVGGVILFARNFENRAQLTALTQDIHAARGEPLLIAVDHEGGRVQRFREDGFTALPAMRTLGEVWDRDPLAAMQLATQTGYVLAAELRACGVDMSFTPVLDLDYGVSKVIGNRAFHADPRVVAMLARALVQGLALTGMAACGKHFPGHGYVEADSHHEIPVDTRTLADILKDDAAPYGWLGDQILPSVMPAHVIYPEVDSQPAGFSRRWVSEILRGQLGYDGVVFSDDLTMEGASVAGDILARAQAALSAGCDMVLVCNRPDLADDLLERLSFTPPAVDRIRRLMPAYAAPDWDSLQADSRYQHARRIQSQIISG.

Substrate contacts are provided by residues Asp73, Arg81, Arg148, and Lys178–His179. The Proton donor/acceptor role is filled by His191. The Nucleophile role is filled by Asp262.

The protein belongs to the glycosyl hydrolase 3 family. NagZ subfamily.

The protein resides in the cytoplasm. It catalyses the reaction Hydrolysis of terminal non-reducing N-acetyl-D-hexosamine residues in N-acetyl-beta-D-hexosaminides.. It functions in the pathway cell wall biogenesis; peptidoglycan recycling. Its function is as follows. Plays a role in peptidoglycan recycling by cleaving the terminal beta-1,4-linked N-acetylglucosamine (GlcNAc) from peptide-linked peptidoglycan fragments, giving rise to free GlcNAc, anhydro-N-acetylmuramic acid and anhydro-N-acetylmuramic acid-linked peptides. This Bordetella avium (strain 197N) protein is Beta-hexosaminidase.